A 621-amino-acid chain; its full sequence is Chaperone protein HscA homolog (621 aa).

This sequence belongs to the heat shock protein 70 family.

Its function is as follows. Chaperone involved in the maturation of iron-sulfur cluster-containing proteins. Has a low intrinsic ATPase activity which is markedly stimulated by HscB. This Acidithiobacillus ferrooxidans (strain ATCC 23270 / DSM 14882 / CIP 104768 / NCIMB 8455) (Ferrobacillus ferrooxidans (strain ATCC 23270)) protein is Chaperone protein HscA homolog.